The following is a 316-amino-acid chain: Putative S-adenosyl-L-methionine-dependent methyltransferase MAB_4606c (316 aa).

Residues aspartate 137 and 166–167 (DL) each bind S-adenosyl-L-methionine.

It belongs to the UPF0677 family.

Exhibits S-adenosyl-L-methionine-dependent methyltransferase activity. The sequence is that of Putative S-adenosyl-L-methionine-dependent methyltransferase MAB_4606c from Mycobacteroides abscessus (strain ATCC 19977 / DSM 44196 / CCUG 20993 / CIP 104536 / JCM 13569 / NCTC 13031 / TMC 1543 / L948) (Mycobacterium abscessus).